Consider the following 107-residue polypeptide: Probable monothiol glutaredoxin 2 (107 aa).

Positions 7 to 107 constitute a Glutaredoxin domain; sequence FKFIENEIKN…LEKMLKAYTR (101 aa). Lys24 is a glutathione binding site. Residue Cys32 coordinates [2Fe-2S] cluster. Residues Arg61, Phe73, and 86-87 each bind glutathione; that span reads CD.

Belongs to the glutaredoxin family. Monothiol subfamily.

The polypeptide is Probable monothiol glutaredoxin 2 (grxC2) (Rickettsia conorii (strain ATCC VR-613 / Malish 7)).